We begin with the raw amino-acid sequence, 631 residues long: ATP-dependent RNA helicase mrh4, mitochondrial (631 aa).

A mitochondrion-targeting transit peptide spans 1 to 45 (MNRLGRLPLPLPPSVCLFCRFRATASLPSSLQATRSMATARLRRR). Residues 68–112 (KERFGPFAGMNQTEARIRETPRARSRAAQKRSGEPEEDSQKESPL) form a disordered region. Basic and acidic residues predominate over residues 98 to 108 (RSGEPEEDSQK). Residues 141 to 174 (TSFDQFQLLPVVRNSISSQALPGLVDVTPTPIQR) carry the Q motif motif. A compositionally biased stretch (basic and acidic residues) spans 180-193 (LLEEPKTEKKPTKA). The tract at residues 180–199 (LLEEPKTEKKPTKADDDEPR) is disordered. The Helicase ATP-binding domain occupies 194 to 406 (DDDEPRYDQY…RKRYPDIKRL (213 aa)). ATP is bound at residue 207 to 214 (AETGSGKT). A disordered region spans residues 229–249 (EARDKELEKKEQEEKAREREE). Residues 353 to 356 (DEAD) carry the DEAD box motif. The 177-residue stretch at 455-631 (GPYASYVAPK…EGMFRGQALI (177 aa)) folds into the Helicase C-terminal domain.

It belongs to the DEAD box helicase family. MRH4 subfamily.

It localises to the mitochondrion. It catalyses the reaction ATP + H2O = ADP + phosphate + H(+). Functionally, ATP-binding RNA helicase involved in mitochondrial RNA metabolism. Required for maintenance of mitochondrial DNA. The polypeptide is ATP-dependent RNA helicase mrh4, mitochondrial (mrh4) (Aspergillus fumigatus (strain ATCC MYA-4609 / CBS 101355 / FGSC A1100 / Af293) (Neosartorya fumigata)).